We begin with the raw amino-acid sequence, 229 residues long: Large ribosomal subunit protein uL1 (229 aa).

It belongs to the universal ribosomal protein uL1 family. In terms of assembly, part of the 50S ribosomal subunit.

Binds directly to 23S rRNA. The L1 stalk is quite mobile in the ribosome, and is involved in E site tRNA release. Functionally, protein L1 is also a translational repressor protein, it controls the translation of the L11 operon by binding to its mRNA. In Listeria monocytogenes serovar 1/2a (strain ATCC BAA-679 / EGD-e), this protein is Large ribosomal subunit protein uL1.